We begin with the raw amino-acid sequence, 139 residues long: D-ribose pyranase (139 aa).

His20 (proton donor) is an active-site residue. Residues Asp28, His106, and 128–130 (YAN) each bind substrate.

This sequence belongs to the RbsD / FucU family. RbsD subfamily. As to quaternary structure, homodecamer.

The protein resides in the cytoplasm. It carries out the reaction beta-D-ribopyranose = beta-D-ribofuranose. It participates in carbohydrate metabolism; D-ribose degradation; D-ribose 5-phosphate from beta-D-ribopyranose: step 1/2. Its function is as follows. Catalyzes the interconversion of beta-pyran and beta-furan forms of D-ribose. The chain is D-ribose pyranase from Photobacterium profundum (strain SS9).